We begin with the raw amino-acid sequence, 598 residues long: Aspartate--tRNA(Asp/Asn) ligase (598 aa).

E177 lines the L-aspartate pocket. The tract at residues 201–204 (QLFK) is aspartate. L-aspartate is bound at residue R223. Residues 223–225 (RDE) and Q232 contribute to the ATP site. Residue H456 participates in L-aspartate binding. E493 contacts ATP. Residue R500 coordinates L-aspartate. 545-548 (GLDR) is a binding site for ATP.

This sequence belongs to the class-II aminoacyl-tRNA synthetase family. Type 1 subfamily. Homodimer.

The protein resides in the cytoplasm. It catalyses the reaction tRNA(Asx) + L-aspartate + ATP = L-aspartyl-tRNA(Asx) + AMP + diphosphate. Aspartyl-tRNA synthetase with relaxed tRNA specificity since it is able to aspartylate not only its cognate tRNA(Asp) but also tRNA(Asn). Reaction proceeds in two steps: L-aspartate is first activated by ATP to form Asp-AMP and then transferred to the acceptor end of tRNA(Asp/Asn). The protein is Aspartate--tRNA(Asp/Asn) ligase of Prochlorococcus marinus (strain MIT 9215).